The following is a 52-amino-acid chain: Large ribosomal subunit protein bL33 (52 aa).

This sequence belongs to the bacterial ribosomal protein bL33 family.

This chain is Large ribosomal subunit protein bL33, found in Chlamydia abortus (strain DSM 27085 / S26/3) (Chlamydophila abortus).